A 256-amino-acid chain; its full sequence is Small ribosomal subunit protein eS1 (256 aa).

Over residues 1–18 (MAVGKNKRLSKGKKGLKK) the composition is skewed to basic residues. Residues 1–22 (MAVGKNKRLSKGKKGLKKKTQD) form a disordered region. At Ala-2 the chain carries N-acetylalanine; partial.

It belongs to the eukaryotic ribosomal protein eS1 family. As to quaternary structure, component of the small ribosomal subunit (SSU). Mature N.crassa ribosomes consist of a small (40S) and a large (60S) subunit. The 40S small subunit contains 1 molecule of ribosomal RNA (18S rRNA) and at least 32 different proteins. The large 60S subunit contains 3 rRNA molecules (26S, 5.8S and 5S rRNA) and at least 42 different proteins.

The protein resides in the cytoplasm. Its function is as follows. Component of the ribosome, a large ribonucleoprotein complex responsible for the synthesis of proteins in the cell. The small ribosomal subunit (SSU) binds messenger RNAs (mRNAs) and translates the encoded message by selecting cognate aminoacyl-transfer RNA (tRNA) molecules. The large subunit (LSU) contains the ribosomal catalytic site termed the peptidyl transferase center (PTC), which catalyzes the formation of peptide bonds, thereby polymerizing the amino acids delivered by tRNAs into a polypeptide chain. The nascent polypeptides leave the ribosome through a tunnel in the LSU and interact with protein factors that function in enzymatic processing, targeting, and the membrane insertion of nascent chains at the exit of the ribosomal tunnel. The sequence is that of Small ribosomal subunit protein eS1 (rps1) from Neurospora crassa (strain ATCC 24698 / 74-OR23-1A / CBS 708.71 / DSM 1257 / FGSC 987).